Consider the following 602-residue polypeptide: 4-hydroxy-3-methylbut-2-en-1-yl diphosphate synthase (flavodoxin) (602 aa).

[4Fe-4S] cluster is bound by residues cysteine 508, cysteine 511, cysteine 543, and glutamate 550.

This sequence belongs to the IspG family. The cofactor is [4Fe-4S] cluster.

It catalyses the reaction (2E)-4-hydroxy-3-methylbut-2-enyl diphosphate + oxidized [flavodoxin] + H2O + 2 H(+) = 2-C-methyl-D-erythritol 2,4-cyclic diphosphate + reduced [flavodoxin]. The protein operates within isoprenoid biosynthesis; isopentenyl diphosphate biosynthesis via DXP pathway; isopentenyl diphosphate from 1-deoxy-D-xylulose 5-phosphate: step 5/6. Converts 2C-methyl-D-erythritol 2,4-cyclodiphosphate (ME-2,4cPP) into 1-hydroxy-2-methyl-2-(E)-butenyl 4-diphosphate. The chain is 4-hydroxy-3-methylbut-2-en-1-yl diphosphate synthase (flavodoxin) from Chlamydia trachomatis serovar D (strain ATCC VR-885 / DSM 19411 / UW-3/Cx).